We begin with the raw amino-acid sequence, 366 residues long: Apolipoprotein A-V (366 aa).

An N-terminal signal peptide occupies residues 1-23 (MASMAAVLTWALALLSAFSATQA). Coiled coils occupy residues 54-157 (ATLK…VGED) and 236-262 (TLKAKALHARIQQNLDQLREELSRAFA). A Phosphothreonine; by FAM20C modification is found at T55. S59 bears the Phosphoserine mark.

Belongs to the apolipoprotein A1/A4/E family. In terms of assembly, interacts with GPIHBP1. Interacts with SORL1; this interaction leads to APOA5 internalization and sorting either to lysosomes and degradation, or to the trans-Golgi network. In terms of processing, phosphorylated by FAM20C in the extracellular medium. In terms of tissue distribution, liver and plasma.

The protein localises to the secreted. It localises to the early endosome. Its subcellular location is the late endosome. The protein resides in the golgi apparatus. It is found in the trans-Golgi network. Its function is as follows. Minor apolipoprotein mainly associated with HDL and to a lesser extent with VLDL. May also be associated with chylomicrons. Important determinant of plasma triglyceride (TG) levels by both being a potent stimulator of apo-CII lipoprotein lipase (LPL) TG hydrolysis and an inhibitor of the hepatic VLDL-TG production rate (without affecting the VLDL-apoB production rate). Activates poorly lecithin:cholesterol acyltransferase (LCAT) and does not enhance efflux of cholesterol from macrophages. Binds heparin. The polypeptide is Apolipoprotein A-V (APOA5) (Homo sapiens (Human)).